Consider the following 596-residue polypeptide: Elongation factor 4 (596 aa).

Residues 2–183 (NNIRNFSIIA…TIIRKIPPPK (182 aa)) enclose the tr-type G domain. Residues 14–19 (DHGKST) and 130–133 (NKID) each bind GTP.

The protein belongs to the TRAFAC class translation factor GTPase superfamily. Classic translation factor GTPase family. LepA subfamily.

Its subcellular location is the cell inner membrane. The enzyme catalyses GTP + H2O = GDP + phosphate + H(+). Required for accurate and efficient protein synthesis under certain stress conditions. May act as a fidelity factor of the translation reaction, by catalyzing a one-codon backward translocation of tRNAs on improperly translocated ribosomes. Back-translocation proceeds from a post-translocation (POST) complex to a pre-translocation (PRE) complex, thus giving elongation factor G a second chance to translocate the tRNAs correctly. Binds to ribosomes in a GTP-dependent manner. This Campylobacter fetus subsp. fetus (strain 82-40) protein is Elongation factor 4.